A 167-amino-acid chain; its full sequence is Neutrophilic granule protein (167 aa).

An N-terminal signal peptide occupies residues 1-21 (MAGLWKTFVLVVALAVVSCEA). Positions 122-141 (EDTQETSFNDKQDVSEKEKF) are disordered.

The protein belongs to the cathelicidin family. In terms of assembly, monomer. Homodimer; disulfide-linked. In terms of tissue distribution, expressed in myeloid bone marrow cells. Expressed in neutrophilic precursors (at protein level). Expressed in myeloid bone marrow cells.

The protein localises to the secreted. It is found in the cytoplasmic granule. Functionally, acts as an inhibitor of cathepsin B (CTSB) activity. Plays a role as a negative regulator of tumor vascular development, cell invasion and metastasis. In Mus musculus (Mouse), this protein is Neutrophilic granule protein.